A 521-amino-acid chain; its full sequence is Probable cytochrome P450 12d1 distal, mitochondrial (521 aa).

The N-terminal 19 residues, M1 to S19, are a transit peptide targeting the mitochondrion. Residue C467 coordinates heme.

This sequence belongs to the cytochrome P450 family. Heme serves as cofactor.

Its subcellular location is the mitochondrion membrane. This chain is Probable cytochrome P450 12d1 distal, mitochondrial, found in Drosophila melanogaster (Fruit fly).